The following is a 480-amino-acid chain: Glutarate-semialdehyde dehydrogenase (480 aa).

NADP(+) is bound by residues 156 to 157 (WN), 180 to 183 (KPAS), and 233 to 234 (GS). The active-site Proton acceptor is E255. L256 is a binding site for NADP(+). C289 functions as the Nucleophile in the catalytic mechanism. Residue E384 participates in NADP(+) binding.

This sequence belongs to the aldehyde dehydrogenase family.

The catalysed reaction is 5-oxopentanoate + NADP(+) + H2O = glutarate + NADPH + 2 H(+). The protein operates within amino-acid degradation. Catalyzes the conversion of 5-oxopentanoate (glutarate semialdehyde) to glutarate. Involved in L-lysine degradation. The polypeptide is Glutarate-semialdehyde dehydrogenase (Pseudomonas putida (strain ATCC 47054 / DSM 6125 / CFBP 8728 / NCIMB 11950 / KT2440)).